A 1175-amino-acid polypeptide reads, in one-letter code: DNA-directed RNA polymerase subunit beta (1175 aa).

A disordered region spans residues 1142-1175; it reads PMELSGSDDDEFDQAGASLGINLSRDERSDADIA. The span at 1165–1175 shows a compositional bias: basic and acidic residues; it reads SRDERSDADIA.

Belongs to the RNA polymerase beta chain family. As to quaternary structure, the RNAP catalytic core consists of 2 alpha, 1 beta, 1 beta' and 1 omega subunit. When a sigma factor is associated with the core the holoenzyme is formed, which can initiate transcription.

The catalysed reaction is RNA(n) + a ribonucleoside 5'-triphosphate = RNA(n+1) + diphosphate. Functionally, DNA-dependent RNA polymerase catalyzes the transcription of DNA into RNA using the four ribonucleoside triphosphates as substrates. This chain is DNA-directed RNA polymerase subunit beta, found in Corynebacterium diphtheriae (strain ATCC 700971 / NCTC 13129 / Biotype gravis).